We begin with the raw amino-acid sequence, 545 residues long: Chaperonin GroEL (545 aa).

ATP is bound by residues 29-32 (TMGP), Lys-50, 86-90 (DGTTT), Gly-414, 477-479 (NAA), and Asp-493.

Belongs to the chaperonin (HSP60) family. As to quaternary structure, forms a cylinder of 14 subunits composed of two heptameric rings stacked back-to-back. Interacts with the co-chaperonin GroES.

It localises to the cytoplasm. It carries out the reaction ATP + H2O + a folded polypeptide = ADP + phosphate + an unfolded polypeptide.. In terms of biological role, together with its co-chaperonin GroES, plays an essential role in assisting protein folding. The GroEL-GroES system forms a nano-cage that allows encapsulation of the non-native substrate proteins and provides a physical environment optimized to promote and accelerate protein folding. The polypeptide is Chaperonin GroEL (Campylobacter fetus subsp. fetus (strain 82-40)).